We begin with the raw amino-acid sequence, 126 residues long: Holo-[acyl-carrier-protein] synthase (126 aa).

Residues aspartate 8 and glutamate 50 each coordinate Mg(2+).

This sequence belongs to the P-Pant transferase superfamily. AcpS family. Mg(2+) is required as a cofactor.

The protein localises to the cytoplasm. It catalyses the reaction apo-[ACP] + CoA = holo-[ACP] + adenosine 3',5'-bisphosphate + H(+). Its function is as follows. Transfers the 4'-phosphopantetheine moiety from coenzyme A to a Ser of acyl-carrier-protein. The sequence is that of Holo-[acyl-carrier-protein] synthase from Micrococcus luteus (strain ATCC 4698 / DSM 20030 / JCM 1464 / CCM 169 / CCUG 5858 / IAM 1056 / NBRC 3333 / NCIMB 9278 / NCTC 2665 / VKM Ac-2230) (Micrococcus lysodeikticus).